We begin with the raw amino-acid sequence, 216 residues long: Cytidylate kinase (216 aa).

An ATP-binding site is contributed by 11 to 19 (GPAGAGKGT).

It belongs to the cytidylate kinase family. Type 1 subfamily.

It is found in the cytoplasm. The enzyme catalyses CMP + ATP = CDP + ADP. It catalyses the reaction dCMP + ATP = dCDP + ADP. This Mesorhizobium japonicum (strain LMG 29417 / CECT 9101 / MAFF 303099) (Mesorhizobium loti (strain MAFF 303099)) protein is Cytidylate kinase.